The chain runs to 183 residues: NADH-quinone oxidoreductase subunit A (183 aa).

3 helical membrane passes run 11-31 (IIAFVIGVTFLCVFMLTVPLL), 63-83 (FYLVAIFFVVFDLEALYLYAW), and 98-118 (VVIFVVDLLIALVYAFSVGAL). A disordered region spans residues 159–183 (TGQIPAQSSGRVKSKTTPALSSEKE).

This sequence belongs to the complex I subunit 3 family. In terms of assembly, NDH-1 is composed of 14 different subunits. Subunits NuoA, H, J, K, L, M, N constitute the membrane sector of the complex.

Its subcellular location is the cell inner membrane. The enzyme catalyses a quinone + NADH + 5 H(+)(in) = a quinol + NAD(+) + 4 H(+)(out). In terms of biological role, NDH-1 shuttles electrons from NADH, via FMN and iron-sulfur (Fe-S) centers, to quinones in the respiratory chain. The immediate electron acceptor for the enzyme in this species is believed to be ubiquinone. Couples the redox reaction to proton translocation (for every two electrons transferred, four hydrogen ions are translocated across the cytoplasmic membrane), and thus conserves the redox energy in a proton gradient. This Acinetobacter baumannii (strain AYE) protein is NADH-quinone oxidoreductase subunit A.